We begin with the raw amino-acid sequence, 93 residues long: Small ribosomal subunit protein uS19c (93 aa).

This sequence belongs to the universal ribosomal protein uS19 family.

Its subcellular location is the plastid. It localises to the chloroplast. Protein S19 forms a complex with S13 that binds strongly to the 16S ribosomal RNA. This is Small ribosomal subunit protein uS19c (rps19-A) from Zea mays (Maize).